The following is a 131-amino-acid chain: Cell cycle protein GpsB (131 aa).

The stretch at 39–76 (LDGIIRDYEAFTNEIDRLKEENTKLFSRVDELTKQLSV) forms a coiled coil. A disordered region spans residues 111 to 131 (KLSDSSVDNHDDGNHSDVDQY). Over residues 117-131 (VDNHDDGNHSDVDQY) the composition is skewed to basic and acidic residues.

The protein belongs to the GpsB family. In terms of assembly, forms polymers through the coiled coil domains. Interacts with PBP1, MreC and EzrA.

The protein localises to the cytoplasm. Its function is as follows. Divisome component that associates with the complex late in its assembly, after the Z-ring is formed, and is dependent on DivIC and PBP2B for its recruitment to the divisome. Together with EzrA, is a key component of the system that regulates PBP1 localization during cell cycle progression. Its main role could be the removal of PBP1 from the cell pole after pole maturation is completed. Also contributes to the recruitment of PBP1 to the division complex. Not essential for septum formation. The polypeptide is Cell cycle protein GpsB (Lacticaseibacillus casei (strain BL23) (Lactobacillus casei)).